A 287-amino-acid polypeptide reads, in one-letter code: Proline iminopeptidase (287 aa).

Residues 22-271 enclose the AB hydrolase-1 domain; the sequence is PLVLLHGGPG…RSRHMAFIDE (250 aa). S98 serves as the catalytic Nucleophile. D238 is an active-site residue. H265 (proton donor) is an active-site residue.

It belongs to the peptidase S33 family.

It localises to the cell envelope. It catalyses the reaction Release of N-terminal proline from a peptide.. Functionally, releases the N-terminal proline from various substrates. This Lactiplantibacillus plantarum (strain ATCC BAA-793 / NCIMB 8826 / WCFS1) (Lactobacillus plantarum) protein is Proline iminopeptidase.